The primary structure comprises 487 residues: Siroheme synthase (487 aa).

The segment at 1–203 is precorrin-2 dehydrogenase /sirohydrochlorin ferrochelatase; it reads MNTFPLFFKL…GRSVEAEQAL (203 aa). Residues 22 to 23 and 43 to 44 contribute to the NAD(+) site; these read EV and PQ. S128 carries the post-translational modification Phosphoserine. Residues 229-487 form a uroporphyrinogen-III C-methyltransferase region; it reads GEVYIVGAGP…DQQAHALNML (259 aa). P238 contacts S-adenosyl-L-methionine. D261 (proton acceptor) is an active-site residue. Catalysis depends on K283, which acts as the Proton donor. Residues 314 to 316, V319, 344 to 345, M396, and A425 each bind S-adenosyl-L-methionine; these read GGD and TA.

This sequence in the N-terminal section; belongs to the precorrin-2 dehydrogenase / sirohydrochlorin ferrochelatase family. It in the C-terminal section; belongs to the precorrin methyltransferase family.

The enzyme catalyses uroporphyrinogen III + 2 S-adenosyl-L-methionine = precorrin-2 + 2 S-adenosyl-L-homocysteine + H(+). It catalyses the reaction precorrin-2 + NAD(+) = sirohydrochlorin + NADH + 2 H(+). The catalysed reaction is siroheme + 2 H(+) = sirohydrochlorin + Fe(2+). Its pathway is cofactor biosynthesis; adenosylcobalamin biosynthesis; precorrin-2 from uroporphyrinogen III: step 1/1. It functions in the pathway cofactor biosynthesis; adenosylcobalamin biosynthesis; sirohydrochlorin from precorrin-2: step 1/1. The protein operates within porphyrin-containing compound metabolism; siroheme biosynthesis; precorrin-2 from uroporphyrinogen III: step 1/1. It participates in porphyrin-containing compound metabolism; siroheme biosynthesis; siroheme from sirohydrochlorin: step 1/1. Its pathway is porphyrin-containing compound metabolism; siroheme biosynthesis; sirohydrochlorin from precorrin-2: step 1/1. In terms of biological role, multifunctional enzyme that catalyzes the SAM-dependent methylations of uroporphyrinogen III at position C-2 and C-7 to form precorrin-2 via precorrin-1. Then it catalyzes the NAD-dependent ring dehydrogenation of precorrin-2 to yield sirohydrochlorin. Finally, it catalyzes the ferrochelation of sirohydrochlorin to yield siroheme. The polypeptide is Siroheme synthase (Psychrobacter sp. (strain PRwf-1)).